Consider the following 352-residue polypeptide: ER-derived vesicles protein ERV41 (352 aa).

At 1–23 (MAGLKTFDAFPKTEEQYKKKSTK) the chain is on the cytoplasmic side. The chain crosses the membrane as a helical span at residues 24–44 (GGLTSLLTYLFLLFIAWTEFG). The Lumenal segment spans residues 45–311 (EYFGGYIDQQ…FLVRLVAICS (267 aa)). The chain crosses the membrane as a helical span at residues 312-332 (FLVYCASWIFTLLDMALITIM). The Cytoplasmic portion of the chain corresponds to 333–352 (GPKWSLRYQPDDKTKGILDR). The short motif at 349-350 (IL) is the Isoleucine-leucine motif element.

This sequence belongs to the ERGIC family. In terms of assembly, interacts with ERV46.

The protein resides in the endoplasmic reticulum membrane. Its subcellular location is the golgi apparatus membrane. It localises to the cytoplasmic vesicle. It is found in the COPII-coated vesicle membrane. Functionally, constituent of COPII-coated endoplasmic reticulum-derived transport vesicles. Required for efficient transport of a subset of secretory proteins to the Golgi. The C-terminal Ile-Leu motif is required for exit from the endoplasmic reticulum. Facilitates retrograde transport from the Golgi to the endoplasmic reticulum. This is ER-derived vesicles protein ERV41 (ERV41) from Saccharomyces cerevisiae (strain ATCC 204508 / S288c) (Baker's yeast).